Reading from the N-terminus, the 319-residue chain is MSSEKPKPHLNKTWYVILFIFALSLFSSVFLSTVYYILAPFEERAAIFDRDQQMLTAAHVLDFSGKFQIYEEGSWQPAVYDKKSHLLKVADQHAPVVTSSVLDAYTQGFVRPLLADKLGQMFSFEEKNINVTEFIEKHQNGHFYQQPLLLFYVILANTEQARAMSAADVIKNPSVVRAIIIPISGFGLWGPIYGYLAVENNGDTVLGTAWYQQAETPGLGANIANPQWQKQFYGKKIFLQAAAGNTDFATTPLGLEVIKGSVQSAFGTTPKALSSIDGISGATLTCNGVTEAYAQSLAPYRNLLISFAKLNQRDHNGSK.

The chain crosses the membrane as a helical span at residues Trp-14 to Val-34. Thr-283 carries the FMN phosphoryl threonine modification.

The protein belongs to the NqrC family. As to quaternary structure, composed of six subunits; NqrA, NqrB, NqrC, NqrD, NqrE and NqrF. The cofactor is FMN.

The protein resides in the cell inner membrane. It carries out the reaction a ubiquinone + n Na(+)(in) + NADH + H(+) = a ubiquinol + n Na(+)(out) + NAD(+). NQR complex catalyzes the reduction of ubiquinone-1 to ubiquinol by two successive reactions, coupled with the transport of Na(+) ions from the cytoplasm to the periplasm. NqrA to NqrE are probably involved in the second step, the conversion of ubisemiquinone to ubiquinol. The protein is Na(+)-translocating NADH-quinone reductase subunit C of Chlamydia caviae (strain ATCC VR-813 / DSM 19441 / 03DC25 / GPIC) (Chlamydophila caviae).